The chain runs to 412 residues: Lysosomal phospholipase A and acyltransferase (412 aa).

The signal sequence occupies residues 1–33 (MGLHLRPYRVGLLPDGLLFLLLLLMLLADPALP). Position 46 (aspartate 46) interacts with substrate. A disulfide bridge links cysteine 65 with cysteine 89. Asparagine 99 carries an N-linked (GlcNAc...) asparagine glycan. The active-site Acyl-ester intermediate is serine 198. Serine 198 serves as a coordination point for Zn(2+). Methionine 199 is a binding site for substrate. N-linked (GlcNAc...) asparagine glycosylation is found at asparagine 273 and asparagine 289. The Zn(2+) site is built by aspartate 340 and cysteine 355. Catalysis depends on charge relay system residues aspartate 360 and histidine 392. Histidine 392 is a Zn(2+) binding site. Asparagine 398 carries N-linked (GlcNAc...) asparagine glycosylation.

It belongs to the AB hydrolase superfamily. Lipase family. Post-translationally, N-glycosylated. N-glycosylation is important for maturation of the enzyme and normal subcellular location. As to expression, detected in blood plasma (at protein level). Ubiquitous. Highly expressed in heart, placenta, skeletal muscle, kidney and pancreas. Detected at lower levels in spleen, thymus, prostate, testis, ovary, small intestine, colon and peripheral blood leukocytes.

Its subcellular location is the lysosome. The protein resides in the secreted. The protein localises to the membrane. It catalyses the reaction a 1,2-diacyl-sn-glycero-3-phosphocholine + H2O = a 2-acyl-sn-glycero-3-phosphocholine + a fatty acid + H(+). The catalysed reaction is 1-hexadecanoyl-2-(9Z-octadecenoyl)-sn-glycero-3-phosphocholine + H2O = 2-(9Z-octadecenoyl)-sn-glycero-3-phosphocholine + hexadecanoate + H(+). The enzyme catalyses 1-hexadecanoyl-2-glutaroyl-sn-glycero-3-phosphocholine + H2O = 2-glutaroyl-sn-glycero-3-phosphocholine + hexadecanoate + H(+). It carries out the reaction 1-hexadecanoyl-2-nonadioyl-sn-glycero-3-phosphocholine + H2O = 2-nonadioyl-sn-glycero-3-phosphocholine + hexadecanoate + H(+). It catalyses the reaction 1-hexadecanoyl-2-(5-oxopentanoyl)-sn-glycero-3-phosphocholine + H2O = 2-(5-oxopentanoyl)-sn-glycero-3-phosphocholine + hexadecanoate + H(+). The catalysed reaction is 1-hexadecanoyl-2-(9-oxononanoyl)-sn-glycero-3-phosphocholine + H2O = 2-(9-oxononanoyl)-sn-glycero-3-phosphocholine + hexadecanoate + H(+). The enzyme catalyses 1,2-dihexadecanoyl-sn-glycero-3-phosphocholine + H2O = 2-hexadecanoyl-sn-glycero-3-phosphocholine + hexadecanoate + H(+). It carries out the reaction a 1,2-diacyl-sn-glycero-3-phosphocholine + H2O = a 1-acyl-sn-glycero-3-phosphocholine + a fatty acid + H(+). It catalyses the reaction 1,2-di-(9Z-octadecenoyl)-sn-glycero-3-phosphocholine + H2O = 1-(9Z-octadecenoyl)-sn-glycero-3-phosphocholine + (9Z)-octadecenoate + H(+). The catalysed reaction is 1-hexadecanoyl-2-(9Z-octadecenoyl)-sn-glycero-3-phosphocholine + H2O = 1-hexadecanoyl-sn-glycero-3-phosphocholine + (9Z)-octadecenoate + H(+). The enzyme catalyses 1,2-dihexadecanoyl-sn-glycero-3-phosphocholine + H2O = 1-hexadecanoyl-sn-glycero-3-phosphocholine + hexadecanoate + H(+). It carries out the reaction a 1-acyl-sn-glycero-3-phosphocholine + H2O = sn-glycerol 3-phosphocholine + a fatty acid + H(+). It catalyses the reaction 1-hexadecanoyl-sn-glycero-3-phosphocholine + H2O = sn-glycerol 3-phosphocholine + hexadecanoate + H(+). The catalysed reaction is N-(acetyl)-sphing-4-enine + a 1,2-diacyl-sn-glycero-3-phosphoethanolamine = 1-O-acyl-N-(acetyl)-sphing-4-enine + a 2-acyl-sn-glycero-3-phosphoethanolamine. The enzyme catalyses 1-hexadecanoyl-2-(9Z-octadecenoyl)-sn-glycero-3-phosphoethanolamine + N-(acetyl)-sphing-4-enine = 2-(9Z-octadecenoyl)-sn-glycero-3-phosphoethanolamine + 1-hexadecanoyl-N-(acetyl)-sphing-4-enine. It carries out the reaction 1-hexadecanoyl-2-(9Z,12Z-octadecadienoyl)-sn-glycero-3-phosphoethanolamine + N-(acetyl)-sphing-4-enine = 2-(9Z,12Z)-octadecadienoyl-sn-glycero-3-phosphoethanolamine + 1-hexadecanoyl-N-(acetyl)-sphing-4-enine. It catalyses the reaction 1-hexadecanoyl-2-(5Z,8Z,11Z,14Z-eicosatetraenoyl)-sn-glycero-3-phosphoethanolamine + N-(acetyl)-sphing-4-enine = 2-(5Z,8Z,11Z,14Z)-eicosatetraenoyl-sn-glycero-3-phosphoethanolamine + 1-hexadecanoyl-N-(acetyl)-sphing-4-enine. The catalysed reaction is N-(acetyl)-sphing-4-enine + a 1,2-diacyl-sn-glycero-3-phosphoethanolamine = 1-O-acyl-N-(acetyl)-sphing-4-enine + a 1-acyl-sn-glycero-3-phosphoethanolamine. The enzyme catalyses 1-hexadecanoyl-2-(9Z-octadecenoyl)-sn-glycero-3-phosphoethanolamine + N-(acetyl)-sphing-4-enine = 1-(9Z-octadecenoyl)-N-(acetyl)-sphing-4-enine + 1-hexadecanoyl-sn-glycero-3-phosphoethanolamine. It carries out the reaction 1-hexadecanoyl-2-(9Z,12Z-octadecadienoyl)-sn-glycero-3-phosphoethanolamine + N-(acetyl)-sphing-4-enine = 1-(9Z,12Z-octadecadienoyl)-N-acetylsphing-4-enine + 1-hexadecanoyl-sn-glycero-3-phosphoethanolamine. It catalyses the reaction 1-hexadecanoyl-2-(5Z,8Z,11Z,14Z-eicosatetraenoyl)-sn-glycero-3-phosphoethanolamine + N-(acetyl)-sphing-4-enine = 1-(5Z,8Z,11Z,14Z)-eicosatetraenoyl-N-(acetyl)-sphing-4-enine + 1-hexadecanoyl-sn-glycero-3-phosphoethanolamine. The catalysed reaction is N-(acetyl)-sphing-4-enine + a 1,2-diacyl-sn-glycero-3-phosphocholine = 1-O-acyl-N-(acetyl)-sphing-4-enine + a 1-acyl-sn-glycero-3-phosphocholine. The enzyme catalyses 1-hexadecanoyl-2-(9Z-octadecenoyl)-sn-glycero-3-phosphocholine + N-(acetyl)-sphing-4-enine = 1-(9Z-octadecenoyl)-N-(acetyl)-sphing-4-enine + 1-hexadecanoyl-sn-glycero-3-phosphocholine. It carries out the reaction 1-hexadecanoyl-2-(9Z,12Z-octadecadienoyl)-sn-glycero-3-phosphocholine + N-(acetyl)-sphing-4-enine = 1-(9Z,12Z-octadecadienoyl)-N-acetylsphing-4-enine + 1-hexadecanoyl-sn-glycero-3-phosphocholine. It catalyses the reaction 1-hexadecanoyl-2-(5Z,8Z,11Z,14Z-eicosatetraenoyl)-sn-glycero-3-phosphocholine + N-(acetyl)-sphing-4-enine = 1-(5Z,8Z,11Z,14Z)-eicosatetraenoyl-N-(acetyl)-sphing-4-enine + 1-hexadecanoyl-sn-glycero-3-phosphocholine. The catalysed reaction is 1-hexadecanoyl-2-(4Z,7Z,10Z,13Z,16Z,19Z-docosahexaenoyl)-sn-glycero-3-phosphocholine + N-(acetyl)-sphing-4-enine = 1-(4Z,7Z,10Z,13Z,16Z,19Z-docosahexaenoyl)-N-(acetyl)-sphing-4-enine + 1-hexadecanoyl-sn-glycero-3-phosphocholine. The enzyme catalyses 1-octadecanoyl-2-(9Z-octadecenoyl)-sn-glycero-3-phosphocholine + N-(acetyl)-sphing-4-enine = 1-(9Z-octadecenoyl)-N-(acetyl)-sphing-4-enine + 1-octadecanoyl-sn-glycero-3-phosphocholine. It carries out the reaction 1-octadecanoyl-2-(9Z,12Z)-octadecadienoyl-sn-glycero-3-phosphocholine + N-(acetyl)-sphing-4-enine = 1-(9Z,12Z-octadecadienoyl)-N-acetylsphing-4-enine + 1-octadecanoyl-sn-glycero-3-phosphocholine. It catalyses the reaction 1-octadecanoyl-2-(5Z,8Z,11Z,14Z-eicosatetraenoyl)-sn-glycero-3-phosphocholine + N-(acetyl)-sphing-4-enine = 1-(5Z,8Z,11Z,14Z)-eicosatetraenoyl-N-(acetyl)-sphing-4-enine + 1-octadecanoyl-sn-glycero-3-phosphocholine. The catalysed reaction is 1-(9Z-octadecenoyl)-2-hexadecanoyl-sn-glycero-3-phosphocholine + N-(acetyl)-sphing-4-enine = 1-hexadecanoyl-N-(acetyl)-sphing-4-enine + 1-(9Z-octadecenoyl)-sn-glycero-3-phosphocholine. The enzyme catalyses 1-(9Z)-octadecenoyl-2-octadecanoyl-sn-glycero-3-phosphocholine + N-(acetyl)-sphing-4-enine = 1-octadecanoyl-N-(acetyl)-sphing-4-enine + 1-(9Z-octadecenoyl)-sn-glycero-3-phosphocholine. It carries out the reaction 1,2-di-(9Z-octadecenoyl)-sn-glycero-3-phosphocholine + N-(acetyl)-sphing-4-enine = 1-(9Z-octadecenoyl)-N-(acetyl)-sphing-4-enine + 1-(9Z-octadecenoyl)-sn-glycero-3-phosphocholine. It catalyses the reaction N-(acetyl)-sphing-4-enine + a 1,2-diacyl-sn-glycero-3-phosphocholine = 1-O-acyl-N-(acetyl)-sphing-4-enine + a 2-acyl-sn-glycero-3-phosphocholine. The catalysed reaction is 1-hexadecanoyl-2-(9Z-octadecenoyl)-sn-glycero-3-phosphocholine + N-(acetyl)-sphing-4-enine = 1-hexadecanoyl-N-(acetyl)-sphing-4-enine + 2-(9Z-octadecenoyl)-sn-glycero-3-phosphocholine. The enzyme catalyses 1-hexadecanoyl-2-(9Z,12Z-octadecadienoyl)-sn-glycero-3-phosphocholine + N-(acetyl)-sphing-4-enine = 2-(9Z,12Z-octadecadienoyl)-sn-glycero-3-phosphocholine + 1-hexadecanoyl-N-(acetyl)-sphing-4-enine. It carries out the reaction 1-hexadecanoyl-2-(5Z,8Z,11Z,14Z-eicosatetraenoyl)-sn-glycero-3-phosphocholine + N-(acetyl)-sphing-4-enine = 1-hexadecanoyl-N-(acetyl)-sphing-4-enine + 2-(5Z,8Z,11Z,14Z)-eicosatetraenoyl-sn-glycero-3-phosphocholine. It catalyses the reaction 1-hexadecanoyl-2-(4Z,7Z,10Z,13Z,16Z,19Z-docosahexaenoyl)-sn-glycero-3-phosphocholine + N-(acetyl)-sphing-4-enine = 2-(4Z,7Z,10Z,13Z,16Z,19Z-docosahexaenoyl)-sn-glycero-3-phosphocholine + 1-hexadecanoyl-N-(acetyl)-sphing-4-enine. The catalysed reaction is 1-hexadecanoyl-2-nonadioyl-sn-glycero-3-phosphocholine + N-(acetyl)-sphing-4-enine = 2-nonadioyl-sn-glycero-3-phosphocholine + 1-hexadecanoyl-N-(acetyl)-sphing-4-enine. The enzyme catalyses 1-octadecanoyl-2-(9Z-octadecenoyl)-sn-glycero-3-phosphocholine + N-(acetyl)-sphing-4-enine = 1-octadecanoyl-N-(acetyl)-sphing-4-enine + 2-(9Z-octadecenoyl)-sn-glycero-3-phosphocholine. It carries out the reaction 1-octadecanoyl-2-(5Z,8Z,11Z,14Z-eicosatetraenoyl)-sn-glycero-3-phosphocholine + N-(acetyl)-sphing-4-enine = 1-octadecanoyl-N-(acetyl)-sphing-4-enine + 2-(5Z,8Z,11Z,14Z)-eicosatetraenoyl-sn-glycero-3-phosphocholine. It catalyses the reaction 1-(9Z-octadecenoyl)-2-hexadecanoyl-sn-glycero-3-phosphocholine + N-(acetyl)-sphing-4-enine = 1-(9Z-octadecenoyl)-N-(acetyl)-sphing-4-enine + 2-hexadecanoyl-sn-glycero-3-phosphocholine. The catalysed reaction is 1-(9Z)-octadecenoyl-2-octadecanoyl-sn-glycero-3-phosphocholine + N-(acetyl)-sphing-4-enine = 2-octadecanoyl-sn-glycero-3-phosphocholine + 1-(9Z-octadecenoyl)-N-(acetyl)-sphing-4-enine. The enzyme catalyses a 1,2-diacyl-sn-glycero-3-phospho-L-serine + N-(acetyl)-sphing-4-enine = a 2-acyl-sn-glycero-3-phospho-L-serine + 1-O-acyl-N-(acetyl)-sphing-4-enine. It carries out the reaction 1-octadecanoyl-2-(9Z-octadecenoyl)-sn-glycero-3-phospho-L-serine + N-(acetyl)-sphing-4-enine = 2-(9Z-octadecenoyl)-sn-glycero-3-phospho-L-serine + 1-octadecanoyl-N-(acetyl)-sphing-4-enine. It catalyses the reaction a 1,2-diacyl-sn-glycero-3-phospho-L-serine + N-(acetyl)-sphing-4-enine = 1-O-acyl-N-(acetyl)-sphing-4-enine + a 1-acyl-sn-glycero-3-phospho-L-serine. The catalysed reaction is 1-octadecanoyl-2-(9Z-octadecenoyl)-sn-glycero-3-phospho-L-serine + N-(acetyl)-sphing-4-enine = 1-octadecanoyl-sn-glycero-3-phosphoserine + 1-(9Z-octadecenoyl)-N-(acetyl)-sphing-4-enine. The enzyme catalyses a 1,2-diacyl-sn-glycero-3-phospho-(1'-sn-glycerol) + N-(acetyl)-sphing-4-enine = 2-acyl-sn-glycero-3-phospho-(1'-sn-glycerol) + 1-O-acyl-N-(acetyl)-sphing-4-enine. It carries out the reaction 1-octadecanoyl-2-(9Z-octadecenoyl)-sn-glycero-3-phospho-(1'-sn-glycerol) + N-(acetyl)-sphing-4-enine = 2-(9Z-octadecenoyl)-sn-glycero-3-phospho-(1'-sn-glycerol) + 1-octadecanoyl-N-(acetyl)-sphing-4-enine. It catalyses the reaction a 1,2-diacyl-sn-glycero-3-phospho-(1'-sn-glycerol) + N-(acetyl)-sphing-4-enine = 1-O-acyl-N-(acetyl)-sphing-4-enine + 1-acyl-sn-glycero-3-phospho-(1'-sn-glycerol). The catalysed reaction is 1-octadecanoyl-2-(9Z-octadecenoyl)-sn-glycero-3-phospho-(1'-sn-glycerol) + N-(acetyl)-sphing-4-enine = 1-octadecanoyl-sn-glycero-3-phospho-(1'-sn-glycerol) + 1-(9Z-octadecenoyl)-N-(acetyl)-sphing-4-enine. The enzyme catalyses an N-acylethanolamine + a 1,2-diacyl-sn-glycero-3-phosphocholine = 2-(acylamino)ethyl fatty acid + a 2-acyl-sn-glycero-3-phosphocholine. It carries out the reaction an N-acylethanolamine + a 1,2-diacyl-sn-glycero-3-phosphocholine = 2-(acylamino)ethyl fatty acid + a 1-acyl-sn-glycero-3-phosphocholine. It catalyses the reaction N-(5Z,8Z,11Z,14Z-eicosatetraenoyl)-ethanolamine + 1,2-di-(9Z-octadecenoyl)-sn-glycero-3-phosphocholine = 2-[(5Z,8Z,11Z,14Z)-eicosatetraenoylamino]ethyl (9Z)-octadecenoate + (9Z-octadecenoyl)-sn-glycero-3-phosphocholine. The catalysed reaction is N-(9Z-octadecenoyl) ethanolamine + 1,2-di-(9Z-octadecenoyl)-sn-glycero-3-phosphocholine = 2-[(9Z)-octadecenoylamino]ethyl (9Z)-octadecenoate + (9Z-octadecenoyl)-sn-glycero-3-phosphocholine. The enzyme catalyses a 3-acyl-sn-glycerol + a 1,2-diacyl-sn-glycero-3-phosphocholine = a 1,3-diacylglycerol + a 1-acyl-sn-glycero-3-phosphocholine. It carries out the reaction a 3-acyl-sn-glycerol + a 1,2-diacyl-sn-glycero-3-phosphocholine = a 1,3-diacylglycerol + a 2-acyl-sn-glycero-3-phosphocholine. It catalyses the reaction 3-(9Z-octadecenoyl)-sn-glycerol + 1,2-di-(9Z-octadecenoyl)-sn-glycero-3-phosphocholine = 1,3-di-(9Z-octadecenoyl)-glycerol + (9Z-octadecenoyl)-sn-glycero-3-phosphocholine. The catalysed reaction is 3-hexadecanoyl-sn-glycerol + 1,2-di-(9Z-octadecenoyl)-sn-glycero-3-phosphocholine = 1-(9Z)-octadecenoyl-3-hexadecanoyl-sn-glycerol + (9Z-octadecenoyl)-sn-glycero-3-phosphocholine. The enzyme catalyses a 1-acyl-sn-glycerol + a 1,2-diacyl-sn-glycero-3-phosphocholine = a 1,3-diacylglycerol + a 2-acyl-sn-glycero-3-phosphocholine. It carries out the reaction a 1-acyl-sn-glycerol + a 1,2-diacyl-sn-glycero-3-phosphocholine = a 1,3-diacylglycerol + a 1-acyl-sn-glycero-3-phosphocholine. It catalyses the reaction 1-(9Z-octadecenoyl)-sn-glycerol + 1,2-di-(9Z-octadecenoyl)-sn-glycero-3-phosphocholine = 1,3-di-(9Z-octadecenoyl)-glycerol + (9Z-octadecenoyl)-sn-glycero-3-phosphocholine. The catalysed reaction is 1-hexadecanoyl-sn-glycerol + 1,2-di-(9Z-octadecenoyl)-sn-glycero-3-phosphocholine = 1-hexadecanoyl-3-(9Z)-octadecenoyl-sn-glycerol + (9Z-octadecenoyl)-sn-glycero-3-phosphocholine. The enzyme catalyses a 2-acylglycerol + a 1,2-diacyl-sn-glycero-3-phosphocholine = a 1,2-diacylglycerol + a 2-acyl-sn-glycero-3-phosphocholine. It carries out the reaction a 2-acylglycerol + a 1,2-diacyl-sn-glycero-3-phosphocholine = a 1,2-diacylglycerol + a 1-acyl-sn-glycero-3-phosphocholine. It catalyses the reaction 2-hexadecanoylglycerol + 1,2-di-(9Z-octadecenoyl)-sn-glycero-3-phosphocholine = 1-(9Z)-octadecenoyl-2-hexadecanoylglycerol + (9Z-octadecenoyl)-sn-glycero-3-phosphocholine. The catalysed reaction is 1-O-alkylglycerol + a 1,2-diacyl-sn-glycero-3-phosphocholine = 1-O-alkyl-3-acylglycerol + a 1-acyl-sn-glycero-3-phosphocholine. The enzyme catalyses 1-O-alkylglycerol + a 1,2-diacyl-sn-glycero-3-phosphocholine = 1-O-alkyl-3-acylglycerol + a 2-acyl-sn-glycero-3-phosphocholine. It carries out the reaction 1-O-hexadecylglycerol + 1,2-di-(9Z-octadecenoyl)-sn-glycero-3-phosphocholine = 1-O-hexadecyl-3-(9Z)-octadecenoylglycerol + (9Z-octadecenoyl)-sn-glycero-3-phosphocholine. It catalyses the reaction 1-O-alkyl-2-acyl-sn-glycerol + a 1,2-diacyl-sn-glycero-3-phosphocholine = 1-O-alkyl-2,3-diacyl-sn-glycerol + a 2-acyl-sn-glycero-3-phosphocholine. The catalysed reaction is 1-O-alkyl-2-acyl-sn-glycerol + a 1,2-diacyl-sn-glycero-3-phosphocholine = 1-O-alkyl-2,3-diacyl-sn-glycerol + a 1-acyl-sn-glycero-3-phosphocholine. The enzyme catalyses 1-O-hexadecyl-2-acetyl-sn-glycerol + 1,2-di-(9Z-octadecenoyl)-sn-glycero-3-phosphocholine = 1-O-hexadecyl-2-acetyl-3-(9Z)-octadecenoyl-sn-glycerol + (9Z-octadecenoyl)-sn-glycero-3-phosphocholine. It carries out the reaction 1-O-hexadecyl-2-O-methyl-sn-glycerol + 1,2-di-(9Z-octadecenoyl)-sn-glycero-3-phosphocholine = 1-O-hexadecyl-2-O-methyl-3-(9Z)-octadecenoyl-sn-glycerol + (9Z-octadecenoyl)-sn-glycero-3-phosphocholine. It catalyses the reaction a 1,2-diacyl-sn-glycero-3-phosphoethanolamine + H2O = a 1-acyl-sn-glycero-3-phosphoethanolamine + a fatty acid + H(+). The catalysed reaction is 1-acyl-2-(5Z,8Z,11Z,14Z)-eicosatetraenoyl-sn-glycero-3-phosphoethanolamine + H2O = a 1-acyl-sn-glycero-3-phosphoethanolamine + (5Z,8Z,11Z,14Z)-eicosatetraenoate + H(+). The enzyme catalyses a 1,2-diacyl-sn-glycero-3-phospho-(1'-sn-glycerol) + H2O = 1-acyl-sn-glycero-3-phospho-(1'-sn-glycerol) + a fatty acid + H(+). It carries out the reaction 1-hexadecanoyl-2-(9Z-octadecenoyl)-sn-glycero-3-phospho-(1'-sn-glycerol) + H2O = 1-hexadecanoyl-sn-glycero-3-phospho-(1'-sn-glycerol) + (9Z)-octadecenoate + H(+). It catalyses the reaction a 1,2-diacyl-sn-glycero-3-phospho-(1'-sn-glycerol) + H2O = 2-acyl-sn-glycero-3-phospho-(1'-sn-glycerol) + a fatty acid + H(+). The catalysed reaction is 1-hexadecanoyl-2-(9Z-octadecenoyl)-sn-glycero-3-phospho-(1'-sn-glycerol) + H2O = 2-(9Z-octadecenoyl)-sn-glycero-3-phospho-(1'-sn-glycerol) + hexadecanoate + H(+). Inhibited by zinc ions at neutral pH. Zinc ions in plasma may keep the enzyme from hydrolyzing inappropriate substrates. Its function is as follows. Has dual calcium-independent phospholipase and O-acyltransferase activities with a potential role in glycerophospholipid homeostasis and remodeling of acyl groups of lipophilic alcohols present in acidic cellular compartments. Catalyzes hydrolysis of the ester bond of the fatty acyl group attached at sn-1 or sn-2 position of phospholipids (phospholipase A1 or A2 activity) and transfer it to the hydroxyl group at the first carbon of lipophilic alcohols (O-acyltransferase activity). Among preferred fatty acyl donors are phosphatidylcholines, phosphatidylethanolamines, phosphatidylglycerols and phosphatidylserines. Favors sn-2 over sn-1 deacylation of unsaturated fatty acyl groups of phosphatidylcholines, phosphatidylethanolamines, and phosphatidylglycerols. Among preferred fatty acyl acceptors are natural lipophilic alcohols including short-chain ceramide N-acetyl-sphingosine (C2 ceramide), alkylacylglycerols, monoacylglycerols, and acylethanolamides such as anandamide and oleoylethanolamide. Selectively hydrolyzes the sn-1 fatty acyl group of truncated oxidized phospholipids and may play a role in detoxification of reactive oxidized phospholipids during oxidative stress. Required for normal phospholipid degradation in alveolar macrophages with potential implications in the clearance of pulmonary surfactant, which is mainly composed of dipalmitoylphosphatidylcholine (1,2-dihexadecanoyl-sn-glycero-3-phosphocholine). Involved in the first step of bis(monoacylglycero)phosphate (BMP) de novo synthesis from phosphatidylglycerol (1,2-diacyl-sn-glycero-3-phospho-(1'-sn-glycerol), PG). BMP is an important player in cargo sorting and degradation, regulation of cellular cholesterol levels and intercellular communication. At neutral pH, hydrolyzes the sn-1 fatty acyl group of the lysophosphatidylcholines. The sequence is that of Lysosomal phospholipase A and acyltransferase from Homo sapiens (Human).